An 87-amino-acid polypeptide reads, in one-letter code: Small ribosomal subunit protein bS20 (87 aa).

Positions 1–26 (MANIKSAQKRAVQSEKRRQHNASQRS) are disordered.

Belongs to the bacterial ribosomal protein bS20 family.

Functionally, binds directly to 16S ribosomal RNA. The polypeptide is Small ribosomal subunit protein bS20 (Glaesserella parasuis serovar 5 (strain SH0165) (Haemophilus parasuis)).